The sequence spans 320 residues: Probable cell division protein WhiA (320 aa).

Residues 276–310 (TLKELGEMVAGGKISKSGINHRLRKIDEIAERLRA) constitute a DNA-binding region (H-T-H motif).

Belongs to the WhiA family.

In terms of biological role, involved in cell division and chromosome segregation. The chain is Probable cell division protein WhiA from Geobacillus thermodenitrificans (strain NG80-2).